The primary structure comprises 453 residues: Probable phenylalanine--tRNA ligase, mitochondrial (453 aa).

The N-terminal 27 residues, 1-27 (MLLTLRVQGARHWLKSTRCLASSAAPA), are a transit peptide targeting the mitochondrion. Residues 142–145 (TAHQ), Arg-164, 171–173 (THY), 178–180 (QAD), Glu-285, and Phe-310 contribute to the substrate site. Residues 356 to 453 (SHYPQCTNDL…SVDSFNVQIR (98 aa)) enclose the FDX-ACB domain.

Belongs to the class-II aminoacyl-tRNA synthetase family.

The protein localises to the mitochondrion matrix. The enzyme catalyses tRNA(Phe) + L-phenylalanine + ATP = L-phenylalanyl-tRNA(Phe) + AMP + diphosphate + H(+). Is responsible for the charging of tRNA(Phe) with phenylalanine in mitochondrial translation. The polypeptide is Probable phenylalanine--tRNA ligase, mitochondrial (Drosophila melanogaster (Fruit fly)).